The primary structure comprises 854 residues: Armadillo repeat-containing protein 2 (854 aa).

3 disordered regions span residues 1–116 (MLSS…SFPK), 140–194 (QGML…PLLT), and 206–255 (EVSL…ETDT). Residues 58-73 (PASSRSPENRPPSSFS) show a composition bias toward low complexity. Composition is skewed to polar residues over residues 74 to 87 (LHASSFELSDSKPI) and 162 to 187 (KPVSVGSSTARRNGTHLTASSATGQL). ARM repeat units follow at residues 255–294 (TEVDEVFWKARIVPILHELENEEDIEEMCAACTQLHRTLE), 298–337 (MLGKKFKRRTVLLKALYKLVDADSDPLSLKLAKLILALKV), 356–396 (EKND…ALKF), 401–442 (PGFL…HLLV), 455–496 (PLTR…KLTS), 499–540 (DCCA…NLTA), 544–583 (QARELFSRETGSVETLLTLFQSFYHHKENSPKLQLSEAKP), 585–605 (AEAEDVLVKLTRVLANIAIHP), 606–649 (RIGP…NLSF), 651–692 (QVKS…NLSQ), 694–733 (HDVCNFLMQKNVHKFMITLLEAKHQDICFSACGVLLNLTV), and 735–777 (KEKR…NFSE).

Functionally, required for sperm flagellum axoneme organization and function. Involved in axonemal central pair complex assembly and/or stability. The sequence is that of Armadillo repeat-containing protein 2 from Mus musculus (Mouse).